The primary structure comprises 398 residues: Alpha-(1,3)-fucosyltransferase 4 (398 aa).

At 1 to 15 (MRARWGRRGARRGGP) the chain is on the cytoplasmic side. A helical; Signal-anchor for type II membrane protein membrane pass occupies residues 16-40 (GLPGTHLALLAASLLSSSVAIYVCW). Topologically, residues 41–398 (KQLPPLPWAS…VPNLAGWFQQ (358 aa)) are lumenal. Residues Asn-84, Asn-183, and Asn-311 are each glycosylated (N-linked (GlcNAc...) asparagine).

This sequence belongs to the glycosyltransferase 10 family.

It localises to the golgi apparatus. It is found in the golgi stack membrane. The catalysed reaction is a beta-D-galactosyl-(1-&gt;4)-N-acetyl-beta-D-glucosaminyl derivative + GDP-beta-L-fucose = a beta-D-galactosyl-(1-&gt;4)-[alpha-L-fucosyl-(1-&gt;3)]-N-acetyl-beta-D-glucosaminyl derivative + GDP + H(+). It catalyses the reaction an N-acetyl-alpha-neuraminyl-(2-&gt;3)-beta-D-galactosyl-(1-&gt;4)-N-acetyl-beta-D-glucosaminyl derivative + GDP-beta-L-fucose = an alpha-Neu5Ac-(2-&gt;3)-beta-D-Gal-(1-&gt;4)-[alpha-L-Fuc-(1-&gt;3)]-beta-D-GlcNAc derivative + GDP + H(+). It carries out the reaction an alpha-Neu5Ac-(2-&gt;3)-beta-D-Gal-(1-&gt;4)-beta-D-GlcNAc-(1-&gt;3)-beta-D-Gal-(1-&gt;4)-beta-D-GlcNAc derivative + GDP-beta-L-fucose = an alpha-Neu5Ac-(2-&gt;3)-beta-D-Gal-(1-&gt;4)-beta-D-GlcNAc-(1-&gt;3)-beta-D-Gal-(1-&gt;4)-[alpha-L-Fuc-(1-&gt;3)]-beta-D-GlcNAc derivative + GDP + H(+). The enzyme catalyses an alpha-Neu5Ac-(2-&gt;3)-beta-D-Gal-(1-&gt;4)-beta-D-GlcNAc6S derivative + GDP-beta-L-fucose = an alpha-Neu5Ac-(2-&gt;3)-beta-D-Gal-(1-&gt;4)-[alpha-L-Fuc-(1-&gt;3)]-beta-D-GlcNAc6S derivative + GDP + H(+). It functions in the pathway protein modification; protein glycosylation. In terms of biological role, catalyzes alpha(1-&gt;3) linkage of fucosyl moiety transferred from GDP-beta-L-fucose to N-acetyl glucosamine (GlcNAc) within type 2 lactosamine (LacNAc, Gal-beta(1-&gt;4)GlcNAc) glycan attached to N- or O-linked glycoproteins. Robustly fucosylates nonsialylated distal LacNAc unit of the polylactosamine chain to form Lewis X antigen (CD15), a glycan determinant known to mediate important cellular functions in development and immunity. Fucosylates with lower efficiency sialylated LacNAc acceptors to form sialyl Lewis X and 6-sulfo sialyl Lewis X determinants that serve as recognition epitopes for C-type lectins. Together with FUT7 contributes to SELE, SELL and SELP selectin ligand biosynthesis and selectin-dependent lymphocyte homing, leukocyte migration and blood leukocyte homeostasis. In a cell type specific manner, may also fucosylate the internal LacNAc unit of the polylactosamine chain to form VIM-2 antigen that serves as recognition epitope for SELE. This is Alpha-(1,3)-fucosyltransferase 4 (FUT4) from Bos taurus (Bovine).